The primary structure comprises 239 residues: Large ribosomal subunit protein uL2 (239 aa).

The interval 200–239 is disordered; sequence VNHPHGGKEHHIGRPSTVSRRAPPGRKVGHIAARRTGRRK. Residues 222-239 show a composition bias toward basic residues; that stretch reads PPGRKVGHIAARRTGRRK.

Belongs to the universal ribosomal protein uL2 family. In terms of assembly, part of the 50S ribosomal subunit. Forms a bridge to the 30S subunit in the 70S ribosome.

In terms of biological role, one of the primary rRNA binding proteins. Required for association of the 30S and 50S subunits to form the 70S ribosome, for tRNA binding and peptide bond formation. It has been suggested to have peptidyltransferase activity; this is somewhat controversial. Makes several contacts with the 16S rRNA in the 70S ribosome. The protein is Large ribosomal subunit protein uL2 of Thermococcus onnurineus (strain NA1).